Reading from the N-terminus, the 276-residue chain is D-apionate oxidoisomerase (276 aa).

Residues 12–14 (GKM), Glu33, and Asp69 contribute to the NAD(+) site. Zn(2+) contacts are provided by His114 and Glu184.

It belongs to the ApnO family. Zn(2+) serves as cofactor.

It catalyses the reaction D-apionate + NAD(+) = 3-oxoisoapionate + NADH + H(+). The protein operates within carbohydrate metabolism. Its function is as follows. Involved in catabolism of D-apiose. Catalyzes the conversion of D-apionate to 3-oxo-isoapionate. This chain is D-apionate oxidoisomerase, found in Cupriavidus necator (strain ATCC 43291 / DSM 13513 / CCUG 52238 / LMG 8453 / N-1) (Ralstonia eutropha).